Reading from the N-terminus, the 135-residue chain is Transcription antitermination protein NusB (135 aa).

This sequence belongs to the NusB family.

Functionally, involved in transcription antitermination. Required for transcription of ribosomal RNA (rRNA) genes. Binds specifically to the boxA antiterminator sequence of the ribosomal RNA (rrn) operons. This is Transcription antitermination protein NusB from Clostridium acetobutylicum (strain ATCC 824 / DSM 792 / JCM 1419 / IAM 19013 / LMG 5710 / NBRC 13948 / NRRL B-527 / VKM B-1787 / 2291 / W).